Here is a 560-residue protein sequence, read N- to C-terminus: Formate--tetrahydrofolate ligase (560 aa).

Residue 70 to 77 participates in ATP binding; sequence TPAGEGKT.

The protein belongs to the formate--tetrahydrofolate ligase family.

The enzyme catalyses (6S)-5,6,7,8-tetrahydrofolate + formate + ATP = (6R)-10-formyltetrahydrofolate + ADP + phosphate. It participates in one-carbon metabolism; tetrahydrofolate interconversion. This Methanocorpusculum labreanum (strain ATCC 43576 / DSM 4855 / Z) protein is Formate--tetrahydrofolate ligase.